The primary structure comprises 258 residues: MMFMVKIITRKVKDIEPLENALLIEGLPGIGHVGRLAAEHLVHEFKGEKFLELFCYDFPPQVLVKDDGTIEYMCAEFYAIREPKPMIVVLGNTQALSPIGQYHLAEEIVKIGIEYGANFVYTLGGFGVGKLCEEVKVYGATTSKELAKKLKEHDILFRTDGGGIVGAAGLMLMFADLNGIPGICLMGETPGYLIDPNAAKAVLEKFCKLENIEINMEELEKRAKGMEQFIEKIKKFEEEMLKAAQAKPPSEEDLRYIG.

A helical transmembrane segment spans residues 163-187 (GIVGAAGLMLMFADLNGIPGICLMG).

The protein localises to the membrane. This is an uncharacterized protein from Methanocaldococcus jannaschii (strain ATCC 43067 / DSM 2661 / JAL-1 / JCM 10045 / NBRC 100440) (Methanococcus jannaschii).